The chain runs to 238 residues: Survival of motor neuron-related-splicing factor 30 (238 aa).

One can recognise a Tudor domain in the interval 72–132; the sequence is SWKVGDKCMA…KPVEEGRKAK (61 aa). The Nuclear localization signal motif lies at 142-160; that stretch reads KKEMIAQQREYKKKKALKK. The residue at position 201 (Ser-201) is a Phosphoserine. Position 219 is an N6-acetyllysine (Lys-219).

This sequence belongs to the SMN family. Associates with spliceosomes. Associates with U4/U5/U6 tri-snRNP and with U2 snRNP.

It localises to the nucleus speckle. The protein resides in the nucleus. It is found in the cajal body. Its function is as follows. Involved in spliceosome assembly. This is Survival of motor neuron-related-splicing factor 30 (SMNDC1) from Pongo abelii (Sumatran orangutan).